Here is a 613-residue protein sequence, read N- to C-terminus: UvrABC system protein C (613 aa).

Residues 12-89 form the GIY-YIG domain; sequence DHPGVYIMHD…IKQHRPRYNV (78 aa). Residues 199–234 form the UVR domain; that stretch reads TALVKELKEQMEAAAARLEFEKAARLRDQLRAVQEV.

It belongs to the UvrC family. As to quaternary structure, interacts with UvrB in an incision complex.

It is found in the cytoplasm. In terms of biological role, the UvrABC repair system catalyzes the recognition and processing of DNA lesions. UvrC both incises the 5' and 3' sides of the lesion. The N-terminal half is responsible for the 3' incision and the C-terminal half is responsible for the 5' incision. In Moorella thermoacetica (strain ATCC 39073 / JCM 9320), this protein is UvrABC system protein C.